Here is a 758-residue protein sequence, read N- to C-terminus: Vitamin K-dependent gamma-carboxylase (758 aa).

Positions 1-31 (MAVSARSARSPPDSDKVQKDKAGQTSGRRQG) are disordered. Ala-2 bears the N-acetylalanine mark. Over 2-60 (AVSARSARSPPDSDKVQKDKAGQTSGRRQGSRMGKLLGFEWTDVSSWGKLVTLLNRPTD) the chain is Cytoplasmic. The span at 12-22 (PDSDKVQKDKA) shows a compositional bias: basic and acidic residues. The chain crosses the membrane as a helical span at residues 61–81 (PASLAVFRFLFGLMMVLDIPQ). Residues 82-113 (ERGLSSLDRRYLDGLEVCRFPLLDALQPLPLD) lie on the Lumenal side of the membrane. Cys-99 and Cys-450 are joined by a disulfide. Residues 114–134 (WMYLVYTIMFLGALGMMLGLR) form a helical membrane-spanning segment. The Cytoplasmic segment spans residues 135–136 (YR). Residues 137–157 (ISCVLFLLPYWYVFLLDKTSW) form a helical membrane-spanning segment. At 158 to 292 (NNHSYLYGLL…VSYFHCMNSQ (135 aa)) the chain is on the lumenal side. A helical membrane pass occupies residues 293 to 313 (LFSIGMFPYVMLASSPLFCSP). Residues 314–361 (EWPRKLVAHCPKRLQELLPLRTAPQPSASCVYKRSRAKGGQKPGLRHR) are Cytoplasmic-facing. A helical transmembrane segment spans residues 362–382 (LGAAFTLLYLLEQLFLPYSHF). The Lumenal segment spans residues 383–758 (LTQGYNNWTN…PNADAVHSEF (376 aa)). Positions 727-758 (PFEPVGEPSPSNTDSSNPNPSEPNADAVHSEF) are disordered. Residues 734–750 (PSPSNTDSSNPNPSEPN) are compositionally biased toward low complexity.

Belongs to the vitamin K-dependent gamma-carboxylase family. As to quaternary structure, monomer. May interact with CALU.

It is found in the endoplasmic reticulum membrane. The enzyme catalyses 4-carboxy-L-glutamyl-[protein] + 2,3-epoxyphylloquinone + H2O + H(+) = phylloquinol + L-glutamyl-[protein] + CO2 + O2. Mediates the vitamin K-dependent carboxylation of glutamate residues to calcium-binding gamma-carboxyglutamate (Gla) residues with the concomitant conversion of the reduced hydroquinone form of vitamin K to vitamin K epoxide. Catalyzes gamma-carboxylation of various proteins, such as blood coagulation factors (F2, F7, F9 and F10), osteocalcin (BGLAP) or matrix Gla protein (MGP). This is Vitamin K-dependent gamma-carboxylase (GGCX) from Delphinapterus leucas (Beluga whale).